A 201-amino-acid polypeptide reads, in one-letter code: Small ribosomal subunit protein uS4 (201 aa).

The 65-residue stretch at 91–155 folds into the S4 RNA-binding domain; that stretch reads TRLDNVVYRA…STLPFQVARE (65 aa).

The protein belongs to the universal ribosomal protein uS4 family. In terms of assembly, part of the 30S ribosomal subunit. Contacts protein S5. The interaction surface between S4 and S5 is involved in control of translational fidelity.

Functionally, one of the primary rRNA binding proteins, it binds directly to 16S rRNA where it nucleates assembly of the body of the 30S subunit. In terms of biological role, with S5 and S12 plays an important role in translational accuracy. The chain is Small ribosomal subunit protein uS4 from Nocardia farcinica (strain IFM 10152).